The primary structure comprises 283 residues: NAD kinase (283 aa).

The active-site Proton acceptor is aspartate 68. NAD(+) contacts are provided by residues 68–69 (DG), 142–143 (ND), arginine 153, aspartate 172, 183–188 (TAYSLS), and glutamine 242.

It belongs to the NAD kinase family. The cofactor is a divalent metal cation.

It localises to the cytoplasm. The catalysed reaction is NAD(+) + ATP = ADP + NADP(+) + H(+). Functionally, involved in the regulation of the intracellular balance of NAD and NADP, and is a key enzyme in the biosynthesis of NADP. Catalyzes specifically the phosphorylation on 2'-hydroxyl of the adenosine moiety of NAD to yield NADP. This is NAD kinase from Caldanaerobacter subterraneus subsp. tengcongensis (strain DSM 15242 / JCM 11007 / NBRC 100824 / MB4) (Thermoanaerobacter tengcongensis).